The sequence spans 163 residues: Type II secretion system protein M (163 aa).

The Cytoplasmic portion of the chain corresponds to 1–19 (MMDKLQGWWRSISAREQRL). Residues 20–40 (VAVGGSCLLIGFCYWIVWQPI) form a helical membrane-spanning segment. The Periplasmic portion of the chain corresponds to 41 to 163 (ANRIAERERQ…VRRLQLSRPQ (123 aa)).

This sequence belongs to the GSP M family. In terms of assembly, type II secretion system is composed of four main components: the outer membrane complex, the inner membrane complex, the cytoplasmic secretion ATPase and the periplasm-spanning pseudopilus. Forms homodimers. Interacts with ExeL/GspL. Interacts with ExeE/GspE and ExeF/GspF.

It is found in the cell inner membrane. Its function is as follows. Inner membrane component of the type II secretion system required for the energy-dependent secretion of extracellular factors such as proteases and toxins from the periplasm. Plays a role in the complex assembly and recruits ExeL resulting in a stable complex in the inner membrane. Provides thus a link between the energy-providing ExeE protein in the cytoplasm and the rest of the T2SS machinery. This Aeromonas hydrophila protein is Type II secretion system protein M (exeM).